A 570-amino-acid polypeptide reads, in one-letter code: Proline--tRNA ligase (570 aa).

This sequence belongs to the class-II aminoacyl-tRNA synthetase family. ProS type 1 subfamily. In terms of assembly, homodimer.

It is found in the cytoplasm. The catalysed reaction is tRNA(Pro) + L-proline + ATP = L-prolyl-tRNA(Pro) + AMP + diphosphate. Its function is as follows. Catalyzes the attachment of proline to tRNA(Pro) in a two-step reaction: proline is first activated by ATP to form Pro-AMP and then transferred to the acceptor end of tRNA(Pro). As ProRS can inadvertently accommodate and process non-cognate amino acids such as alanine and cysteine, to avoid such errors it has two additional distinct editing activities against alanine. One activity is designated as 'pretransfer' editing and involves the tRNA(Pro)-independent hydrolysis of activated Ala-AMP. The other activity is designated 'posttransfer' editing and involves deacylation of mischarged Ala-tRNA(Pro). The misacylated Cys-tRNA(Pro) is not edited by ProRS. In Neisseria gonorrhoeae (strain ATCC 700825 / FA 1090), this protein is Proline--tRNA ligase.